A 336-amino-acid chain; its full sequence is HTH-type transcriptional repressor PurR (336 aa).

One can recognise an HTH lacI-type domain in the interval 2-56 (ATIKDVAKMAGVSTTTVSHVINKTRFVAKDTEEAVLSAIKQLNYSPSAVARSLKV). Positions 4–23 (IKDVAKMAGVSTTTVSHVIN) form a DNA-binding region, H-T-H motif. A DNA-binding region spans residues 48-56 (SAVARSLKV). Hypoxanthine contacts are provided by Tyr-73, Lys-188, Thr-190, Phe-219, and Asp-273.

In terms of assembly, homodimer.

It participates in purine metabolism; purine nucleotide biosynthesis [regulation]. Is the main repressor of the genes involved in the de novo synthesis of purine nucleotides, regulating purB, purC, purEK, purF, purHD, purL, purMN and guaBA expression. PurR is allosterically activated to bind its cognate DNA by binding the purine corepressors, hypoxanthine or guanine, thereby effecting transcription repression. This is HTH-type transcriptional repressor PurR from Haemophilus influenzae (strain 86-028NP).